The primary structure comprises 743 residues: NAD(P)H-quinone oxidoreductase subunit 5, chloroplastic (743 aa).

16 helical membrane-spanning segments follow: residues 9 to 29, 40 to 60, 89 to 109, 125 to 145, 147 to 167, 185 to 205, 219 to 239, 258 to 278, 284 to 304, 327 to 347, 354 to 374, 396 to 416, 425 to 445, 551 to 571, 607 to 627, and 723 to 743; these read WIIP…LLLF, WAFQ…NLSI, IDPL…MVLI, FAYM…SNLI, IYIF…FWFT, GDFG…SFEF, NEVN…GAIA, TPIS…FLVA, FIVI…TVFF, LGYM…FHLI, ALLF…VGYC, NSFL…CFWS, WLYS…TAFY, LFPI…GIPF, VFSV…YKPV, and YLFF…FLNL.

It belongs to the complex I subunit 5 family. NDH is composed of at least 16 different subunits, 5 of which are encoded in the nucleus.

Its subcellular location is the plastid. The protein resides in the chloroplast thylakoid membrane. The enzyme catalyses a plastoquinone + NADH + (n+1) H(+)(in) = a plastoquinol + NAD(+) + n H(+)(out). It catalyses the reaction a plastoquinone + NADPH + (n+1) H(+)(in) = a plastoquinol + NADP(+) + n H(+)(out). Functionally, NDH shuttles electrons from NAD(P)H:plastoquinone, via FMN and iron-sulfur (Fe-S) centers, to quinones in the photosynthetic chain and possibly in a chloroplast respiratory chain. The immediate electron acceptor for the enzyme in this species is believed to be plastoquinone. Couples the redox reaction to proton translocation, and thus conserves the redox energy in a proton gradient. In Ambrosia trifida (Giant ragweed), this protein is NAD(P)H-quinone oxidoreductase subunit 5, chloroplastic (ndhF).